The primary structure comprises 348 residues: Probable purine nucleoside permease C285.05 (348 aa).

The N-terminal stretch at 1–21 (MLFLKLVASVLALMTIVPAQA) is a signal peptide.

This sequence belongs to the NUP family.

The protein localises to the endoplasmic reticulum. Probable nucleoside permease that transports adenosine and guanosine. The protein is Probable purine nucleoside permease C285.05 of Schizosaccharomyces pombe (strain 972 / ATCC 24843) (Fission yeast).